A 423-amino-acid polypeptide reads, in one-letter code: MKAELIAVGTEILTGQIVNTNAQFLSEKMAELGIDVYFQTAVGDNEERLLSVITTASQRSDLVILCGGLGPTKDDLTKQTLAKYLRKDLVYDEQACQKLDDFFAKRKPSSRTPNNERQAQVIEGSIPLPNKTGLAVGGFITVDGISYVVLPGPPSELKSMVNEELVPLLSKQYSTLYSKVLRFFGVGESQLVTVLSDFIENQTDPTIAPYAKTGEVTLRLSTKTENQALADKKLGQLEAQLLSRKTLEGQPLADVFYGYGEDNSLARETFELLVKYDKTITAAESLTAGLFQSTLASFPGASQVFNGGFVAYSMEEKAKMLGLPLEELKSHGVVSAYTAEGMAEQARLLTGADIGVSLTGVAGPDMLEEQPAGTVFIGLATQNKVESIKVLISGRSRLDVRYIATLHAFNMVRKTLLKLENLL.

This sequence belongs to the CinA family.

The polypeptide is Putative competence-damage inducible protein (Streptococcus pyogenes serotype M12 (strain MGAS2096)).